The chain runs to 159 residues: IQ domain-containing protein J (159 aa).

The region spanning 47–67 (ESKVKIIQRAWREYLQRQEPL) is the IQ domain. Positions 63–88 (RQEPLGKRSPSPPSVSSEKLSSSVSM) are disordered. Low complexity predominate over residues 76-87 (SVSSEKLSSSVS).

In Homo sapiens (Human), this protein is IQ domain-containing protein J.